Here is a 431-residue protein sequence, read N- to C-terminus: Enolase (431 aa).

Residue glutamine 166 coordinates (2R)-2-phosphoglycerate. Catalysis depends on glutamate 208, which acts as the Proton donor. Aspartate 245, glutamate 288, and aspartate 315 together coordinate Mg(2+). (2R)-2-phosphoglycerate is bound by residues lysine 340, arginine 369, serine 370, and lysine 391. Lysine 340 functions as the Proton acceptor in the catalytic mechanism.

This sequence belongs to the enolase family. Mg(2+) is required as a cofactor.

It localises to the cytoplasm. The protein localises to the secreted. Its subcellular location is the cell surface. The enzyme catalyses (2R)-2-phosphoglycerate = phosphoenolpyruvate + H2O. It participates in carbohydrate degradation; glycolysis; pyruvate from D-glyceraldehyde 3-phosphate: step 4/5. Functionally, catalyzes the reversible conversion of 2-phosphoglycerate (2-PG) into phosphoenolpyruvate (PEP). It is essential for the degradation of carbohydrates via glycolysis. This is Enolase from Clostridium perfringens (strain 13 / Type A).